Consider the following 170-residue polypeptide: Translationally-controlled tumor protein homolog (170 aa).

The region spanning 1-170 (MLIYSDIITG…WKHGLKETKV (170 aa)) is the TCTP domain.

The protein belongs to the TCTP family.

It localises to the cytoplasm. It is found in the cytoskeleton. Its function is as follows. Involved in protein synthesis. Involved in microtubule stabilization. The sequence is that of Translationally-controlled tumor protein homolog from Neurospora crassa (strain ATCC 24698 / 74-OR23-1A / CBS 708.71 / DSM 1257 / FGSC 987).